A 90-amino-acid polypeptide reads, in one-letter code: Putative protein p49 (90 aa).

The protein is Putative protein p49 (49) of Escherichia coli (Bacteriophage APSE-1).